The primary structure comprises 151 residues: Deoxyuridine 5'-triphosphate nucleotidohydrolase (151 aa).

Substrate contacts are provided by residues 70–72, asparagine 83, and 87–89; these read RSG and TID.

This sequence belongs to the dUTPase family. Mg(2+) serves as cofactor.

It catalyses the reaction dUTP + H2O = dUMP + diphosphate + H(+). It functions in the pathway pyrimidine metabolism; dUMP biosynthesis; dUMP from dCTP (dUTP route): step 2/2. Its function is as follows. This enzyme is involved in nucleotide metabolism: it produces dUMP, the immediate precursor of thymidine nucleotides and it decreases the intracellular concentration of dUTP so that uracil cannot be incorporated into DNA. This chain is Deoxyuridine 5'-triphosphate nucleotidohydrolase, found in Ruegeria pomeroyi (strain ATCC 700808 / DSM 15171 / DSS-3) (Silicibacter pomeroyi).